A 388-amino-acid polypeptide reads, in one-letter code: Dauer abnormal formation protein 25 (388 aa).

ANK repeat units follow at residues S40–D69, T74–L103, and I107–E137. Zn(2+)-binding residues include C321, C324, C333, C336, C341, C345, H353, and C357. Residues C321–C357 form an MYND-type zinc finger.

As to expression, expressed in many ciliated sensory neurons.

It is found in the cell projection. It localises to the cilium. May be involved in the trafficking and dendritic transport of signaling proteins, such as the receptor-type guanylate cyclases gcy-12 and daf-11, to the cilia. In ciliated sensory neurons, required for the calcium flux to the cytoplasm in response to onset and removal of a nitric oxide (NO) stimulus and is thereby required for the behavioral avoidance response to NO-producing organisms like P.aeruginosa. This Caenorhabditis elegans protein is Dauer abnormal formation protein 25 (daf-25).